A 623-amino-acid polypeptide reads, in one-letter code: uncharacterized protein (623 aa).

Polar residues predominate over residues 1–18 (MSSRSGSADTFTQRSDSN). Disordered stretches follow at residues 1-107 (MSSR…DPFT), 132-181 (LGSD…EIGA), 207-231 (SWNL…ADTD), 298-349 (REET…ESDQ), 384-464 (RKSV…DRNV), 533-553 (SIND…PPET), and 568-623 (VESR…TKGD). The segment covering 25–34 (ISLDDVRDNN) has biased composition (basic and acidic residues). A compositionally biased stretch (low complexity) spans 39–49 (SSSGISTTGSS). Residues 132–144 (LGSDTARPTSNGG) show a composition bias toward polar residues. Positions 165–177 (STSTWGPSGPTTP) are enriched in low complexity. Over residues 328-339 (EKSTFSRISEQP) the composition is skewed to polar residues. A compositionally biased stretch (low complexity) spans 400–417 (QTPTISTASSPIQPSSSP). The span at 533-548 (SINDLQQGTSSSQNQA) shows a compositional bias: polar residues. A compositionally biased stretch (low complexity) spans 604 to 614 (PSASPSTSRTR).

This is an uncharacterized protein from Emericella nidulans (strain FGSC A4 / ATCC 38163 / CBS 112.46 / NRRL 194 / M139) (Aspergillus nidulans).